The following is a 42-amino-acid chain: MMYPKNLPAGADTLIGMVGAISLTVMMILFFIAIVWFLQGTR.

The helical transmembrane segment at 18–38 (VGAISLTVMMILFFIAIVWFL) threads the bilayer.

It is found in the host membrane. This is an uncharacterized protein from His1 virus (isolate Australia/Victoria) (His1V).